Reading from the N-terminus, the 750-residue chain is Photosystem I P700 chlorophyll a apoprotein A1 (750 aa).

The next 8 membrane-spanning stretches (helical) occupy residues 70 to 93, 156 to 179, 195 to 219, 291 to 309, 346 to 369, 385 to 411, 433 to 455, and 531 to 549; these read VFSA…FHGA, LYCT…FHYH, LNHH…HVSL, IAHH…GHMY, WHAQ…HHMY, LSLF…IFMV, AIIS…LYIH, and FLVH…LILL. Residues C573 and C582 each contribute to the [4Fe-4S] cluster site. The next 2 helical transmembrane spans lie at 589-610 and 664-686; these read HVFL…HFSW and LSAY…MFLF. Chlorophyll a' is bound at residue H675. Residues M683 and Y691 each coordinate chlorophyll a. Position 692 (W692) interacts with phylloquinone. The chain crosses the membrane as a helical span at residues 724–744; that stretch reads AVGVTHYLLGGIATTWAFFLA.

The protein belongs to the PsaA/PsaB family. As to quaternary structure, the PsaA/B heterodimer binds the P700 chlorophyll special pair and subsequent electron acceptors. PSI consists of a core antenna complex that captures photons, and an electron transfer chain that converts photonic excitation into a charge separation. The eukaryotic PSI reaction center is composed of at least 11 subunits. P700 is a chlorophyll a/chlorophyll a' dimer, A0 is one or more chlorophyll a, A1 is one or both phylloquinones and FX is a shared 4Fe-4S iron-sulfur center. is required as a cofactor.

Its subcellular location is the plastid. The protein resides in the chloroplast thylakoid membrane. It catalyses the reaction reduced [plastocyanin] + hnu + oxidized [2Fe-2S]-[ferredoxin] = oxidized [plastocyanin] + reduced [2Fe-2S]-[ferredoxin]. Its function is as follows. PsaA and PsaB bind P700, the primary electron donor of photosystem I (PSI), as well as the electron acceptors A0, A1 and FX. PSI is a plastocyanin-ferredoxin oxidoreductase, converting photonic excitation into a charge separation, which transfers an electron from the donor P700 chlorophyll pair to the spectroscopically characterized acceptors A0, A1, FX, FA and FB in turn. Oxidized P700 is reduced on the lumenal side of the thylakoid membrane by plastocyanin. The sequence is that of Photosystem I P700 chlorophyll a apoprotein A1 from Acorus calamus (Sweet flag).